We begin with the raw amino-acid sequence, 56 residues long: Large ribosomal subunit protein bL33 (56 aa).

Belongs to the bacterial ribosomal protein bL33 family.

This Ehrlichia ruminantium (strain Gardel) protein is Large ribosomal subunit protein bL33.